A 334-amino-acid polypeptide reads, in one-letter code: Fructose-1,6-bisphosphatase class 1 (334 aa).

Residues glutamate 91, aspartate 113, leucine 115, and aspartate 116 each coordinate Mg(2+). Substrate contacts are provided by residues aspartate 116 to serine 119, asparagine 208, and lysine 274. Glutamate 280 contributes to the Mg(2+) binding site.

This sequence belongs to the FBPase class 1 family. Homotetramer. Mg(2+) serves as cofactor.

The protein resides in the cytoplasm. The enzyme catalyses beta-D-fructose 1,6-bisphosphate + H2O = beta-D-fructose 6-phosphate + phosphate. Its pathway is carbohydrate biosynthesis; gluconeogenesis. This Janthinobacterium sp. (strain Marseille) (Minibacterium massiliensis) protein is Fructose-1,6-bisphosphatase class 1.